A 154-amino-acid chain; its full sequence is MKELFNILLINGPNLNLLGHREPKIYGNTTLSQLTHALTKEATTFNIHLHHIQSNSESTLINKIHNSKNNINYIIINAGAFSHTSIALRDALIGINIPFIEVHISNIYTRENFRSHSWLSDISSGVICGLGLDGYFWALRTAIKRIKKISTLQV.

Residue Tyr-26 is the Proton acceptor of the active site. Positions 77, 83, and 90 each coordinate substrate. The active-site Proton donor is His-103. Substrate contacts are provided by residues 104–105 (IS) and Arg-114.

It belongs to the type-II 3-dehydroquinase family. Homododecamer.

The enzyme catalyses 3-dehydroquinate = 3-dehydroshikimate + H2O. It functions in the pathway metabolic intermediate biosynthesis; chorismate biosynthesis; chorismate from D-erythrose 4-phosphate and phosphoenolpyruvate: step 3/7. In terms of biological role, catalyzes a trans-dehydration via an enolate intermediate. This is 3-dehydroquinate dehydratase from Buchnera aphidicola subsp. Baizongia pistaciae (strain Bp).